Here is a 206-residue protein sequence, read N- to C-terminus: LexA repressor (206 aa).

The H-T-H motif DNA-binding region spans 28-48 (RAEIASELGFKSANAAEEHLK). Catalysis depends on for autocatalytic cleavage activity residues Ser-122 and Lys-160.

The protein belongs to the peptidase S24 family. As to quaternary structure, homodimer.

It carries out the reaction Hydrolysis of Ala-|-Gly bond in repressor LexA.. Represses a number of genes involved in the response to DNA damage (SOS response), including recA and lexA. In the presence of single-stranded DNA, RecA interacts with LexA causing an autocatalytic cleavage which disrupts the DNA-binding part of LexA, leading to derepression of the SOS regulon and eventually DNA repair. The chain is LexA repressor from Tolumonas auensis (strain DSM 9187 / NBRC 110442 / TA 4).